Consider the following 457-residue polypeptide: Mannose-6-phosphate isomerase (457 aa).

Residues Q108, H110, E135, and H292 each coordinate Zn(2+). Residue R311 is part of the active site.

The protein belongs to the mannose-6-phosphate isomerase type 1 family. Requires Zn(2+) as cofactor.

The protein localises to the cytoplasm. It catalyses the reaction D-mannose 6-phosphate = D-fructose 6-phosphate. It participates in nucleotide-sugar biosynthesis; GDP-alpha-D-mannose biosynthesis; alpha-D-mannose 1-phosphate from D-fructose 6-phosphate: step 1/2. In terms of biological role, involved in the synthesis of the GDP-mannose and dolichol-phosphate-mannose required for a number of critical mannosyl transfer reactions. This Aspergillus fumigatus (strain ATCC MYA-4609 / CBS 101355 / FGSC A1100 / Af293) (Neosartorya fumigata) protein is Mannose-6-phosphate isomerase (pmi1).